The primary structure comprises 125 residues: Large ribosomal subunit protein bL12 (125 aa).

It belongs to the bacterial ribosomal protein bL12 family. As to quaternary structure, homodimer. Part of the ribosomal stalk of the 50S ribosomal subunit. Forms a multimeric L10(L12)X complex, where L10 forms an elongated spine to which 2 to 4 L12 dimers bind in a sequential fashion. Binds GTP-bound translation factors.

In terms of biological role, forms part of the ribosomal stalk which helps the ribosome interact with GTP-bound translation factors. Is thus essential for accurate translation. The chain is Large ribosomal subunit protein bL12 from Gluconobacter oxydans (strain 621H) (Gluconobacter suboxydans).